We begin with the raw amino-acid sequence, 577 residues long: Moesin (577 aa).

Residues 2-295 (PKTISVRVTT…GNHELYMRRR (294 aa)) enclose the FERM domain. Serine 74 carries the post-translational modification Phosphoserine. Position 79 is an N6-acetyllysine (lysine 79). At lysine 83 the chain carries N6-succinyllysine. Positions 115-120 (IYCPPE) match the [IL]-x-C-x-x-[DE] motif motif. Tyrosine 116 is modified (phosphotyrosine). S-nitrosocysteine is present on cysteine 117. N6-acetyllysine occurs at positions 139 and 165. Disordered stretches follow at residues 323–342 (LENE…KIER), 375–409 (LEQE…ASRD), and 466–518 (AMST…NERV). Over residues 375–401 (LEQERKRAQSEAEKLAKERQEAEEAKE) the composition is skewed to basic and acidic residues. Serine 407 is subject to Phosphoserine. Residues 476–487 (AENEQDEQDENG) are compositionally biased toward acidic residues. Residues 492 to 518 (ADLRADAMAKDRSEEERTTEAEKNERV) show a composition bias toward basic and acidic residues. Serine 527 carries the phosphoserine modification. Residue threonine 558 is modified to Phosphothreonine; by ROCK2 and STK10.

In resting T-cells, part of a PAG1-NHERF1-MSN complex which is disrupted upon TCR activation. Interacts with NHERF1. Interacts with PPP1R16B. Interacts with SELPLG and SYK; these interactions mediate the activation of SYK by SELPLG. Interacts with PDPN (via cytoplasmic domain); this interaction activates RHOA and promotes epithelial-mesenchymal transition. Interacts with SPN/CD43 cytoplasmic tail. Interacts with CD44. Interacts with ICAM2. Interacts with ICAM3 (via C-terminus). Interacts with PDZD8. Interacts with F-actin. Interacts with CD46. Interacts with PTPN6. As to quaternary structure, (Microbial infection) Interacts with HIV-1 envelope protein gp120. In terms of processing, phosphorylation on Thr-558 is crucial for the formation of microvilli-like structures. Phosphorylation by ROCK2 suppresses the head-to-tail association of the N-terminal and C-terminal halves resulting in an opened conformation which is capable of actin and membrane-binding. Phosphorylation on Thr-558 by STK10 negatively regulates lymphocyte migration and polarization. Post-translationally, S-nitrosylation of Cys-117 is induced by interferon-gamma and oxidatively-modified low-densitity lipoprotein (LDL(ox)) implicating the iNOS-S100A8/9 transnitrosylase complex. In all tissues and cultured cells studied.

It localises to the cell membrane. The protein localises to the cytoplasm. It is found in the cytoskeleton. The protein resides in the apical cell membrane. Its subcellular location is the cell projection. It localises to the microvillus membrane. The protein localises to the microvillus. With respect to regulation, a head-to-tail association, of the N-terminal and C-terminal halves results in a closed conformation (inactive form) which is incapable of actin or membrane-binding. Ezrin-radixin-moesin (ERM) family protein that connects the actin cytoskeleton to the plasma membrane and thereby regulates the structure and function of specific domains of the cell cortex. Tethers actin filaments by oscillating between a resting and an activated state providing transient interactions between moesin and the actin cytoskeleton. Once phosphorylated on its C-terminal threonine, moesin is activated leading to interaction with F-actin and cytoskeletal rearrangement. These rearrangements regulate many cellular processes, including cell shape determination, membrane transport, and signal transduction. The role of moesin is particularly important in immunity acting on both T and B-cells homeostasis and self-tolerance, regulating lymphocyte egress from lymphoid organs. Modulates phagolysosomal biogenesis in macrophages. Also participates in immunologic synapse formation. The polypeptide is Moesin (Homo sapiens (Human)).